The primary structure comprises 199 residues: Recombination protein RecR (199 aa).

The segment at 57–72 (CSICGNITDKDPCYVC) adopts a C4-type zinc-finger fold. Residues 80 to 176 (TIVCVVQDSR…RVTRIAHGLP (97 aa)) form the Toprim domain.

This sequence belongs to the RecR family.

Its function is as follows. May play a role in DNA repair. It seems to be involved in an RecBC-independent recombinational process of DNA repair. It may act with RecF and RecO. This chain is Recombination protein RecR, found in Exiguobacterium sibiricum (strain DSM 17290 / CCUG 55495 / CIP 109462 / JCM 13490 / 255-15).